Consider the following 397-residue polypeptide: Teichoic acid D-alanine hydrolase (397 aa).

The N-terminal stretch at 1–23 (MKFNKVKLVIHACVLLFIIISIA) is a signal peptide.

The protein localises to the cell membrane. It carries out the reaction [(4-D-Ala)-(2-GlcNAc)-Rib-ol-P]n-[Gro-P]m-beta-D-ManNAc-(1-&gt;4)-alpha-D-GlcNAc-P-peptidoglycan + n H2O = [(2-GlcNAc)-Rib-ol-P]n-[Gro-P]m-beta-D-ManNAc-(1-&gt;4)-alpha-D-GlcNAc-P-peptidoglycan + n D-alanine.. Functionally, catalyzes the liberation of D-alanyl moieties present on wall teichoic acid (WTA) and lipoteichoic acid (LTA). Affects the methicillin resistance level and autolysis in the presence of Triton X-100 as well as the cell wall structure. This Staphylococcus aureus (strain NCTC 8325 / PS 47) protein is Teichoic acid D-alanine hydrolase (fmtA).